The sequence spans 720 residues: NAD(+) hydrolase ApTIR (720 aa).

The 131-residue stretch at 1–131 (MRYDAFISYS…AVPPALRGVF (131 aa)) folds into the TIR domain. Residues 10 to 11 (SH) and Ala-48 each bind NAD(+). Glu-84 is an active-site residue. A helical membrane pass occupies residues 192–211 (GALAVVCALLLLVAGTAVAW). 2 disordered regions span residues 231 to 275 (ATAA…AVAE) and 292 to 359 (EGIA…EEAV). 2 stretches are compositionally biased toward basic and acidic residues: residues 256–268 (EQQR…EEAR) and 307–359 (AEAR…EEAV). Residues 313–362 (RGVADAEKAKANRAAAEAERQRKIAADEQRKAHEAAAEAERQREEAVKQQ) are a coiled coil. WD repeat units lie at residues 420–459 (GHTA…APRR), 465–504 (SSTA…APRR), 510–549 (GHTD…APRR), 555–594 (DHTA…APRR), 600–639 (GHTA…APRR), 645–684 (GHTA…APRR), and 690–720 (GHTD…CCGM).

It localises to the cell membrane. The enzyme catalyses NAD(+) + H2O = ADP-D-ribose + nicotinamide + H(+). NAD(+) hydrolase (NADase) that catalyzes cleavage of NAD(+) into ADP-D-ribose (ADPR) and nicotinamide. The polypeptide is NAD(+) hydrolase ApTIR (Actinoplanes sp. (strain ATCC 31044 / CBS 674.73 / SE50/110)).